A 321-amino-acid chain; its full sequence is Methionine import ATP-binding protein MetN (321 aa).

An ABC transporter domain is found at 2 to 241; it reads INAVDLHKVY…PGSLLARSLF (240 aa). An ATP-binding site is contributed by 38 to 45; it reads GPSGAGKS.

Belongs to the ABC transporter superfamily. Methionine importer (TC 3.A.1.24) family. In terms of assembly, the complex is composed of two ATP-binding proteins (MetN), two transmembrane proteins (MetI) and a solute-binding protein (MetQ).

Its subcellular location is the cell membrane. The catalysed reaction is L-methionine(out) + ATP + H2O = L-methionine(in) + ADP + phosphate + H(+). It catalyses the reaction D-methionine(out) + ATP + H2O = D-methionine(in) + ADP + phosphate + H(+). In terms of biological role, part of the ABC transporter complex MetNIQ involved in methionine import. Responsible for energy coupling to the transport system. This is Methionine import ATP-binding protein MetN from Thermobifida fusca (strain YX).